The sequence spans 60 residues: Large ribosomal subunit protein uL30 (60 aa).

The protein belongs to the universal ribosomal protein uL30 family. Part of the 50S ribosomal subunit.

This is Large ribosomal subunit protein uL30 from Pseudoalteromonas translucida (strain TAC 125).